A 90-amino-acid chain; its full sequence is Small cysteine-rich outer membrane protein OmcA (90 aa).

An N-terminal signal peptide occupies residues 1–19 (MKKAVLIAAMFCGVVSLSS). The N-palmitoyl cysteine moiety is linked to residue cysteine 20. Residue cysteine 20 is the site of S-diacylglycerol cysteine attachment. A disordered region spans residues 69 to 90 (TECNSQSPQVKGCTSPDGRCKQ).

As to quaternary structure, part of a disulfide cross-linked outer membrane complex (COMC) composed of the major outer membrane porin (MOMP), the small cysteine-rich protein (OmcA) and the large cysteine-rich periplasmic protein (OmcB).

The protein resides in the cell outer membrane. In terms of biological role, in elementary bodies (EBs, the infectious stage, which is able to survive outside the host cell) provides the structural integrity of the outer envelope through disulfide cross-links with the large cysteine-rich periplasmic protein and the major outer membrane porin. It has been described in publications as the Sarkosyl-insoluble COMC (Chlamydia outer membrane complex), and serves as the functional equivalent of peptidoglycan. The polypeptide is Small cysteine-rich outer membrane protein OmcA (omcA) (Chlamydia pneumoniae (Chlamydophila pneumoniae)).